A 369-amino-acid polypeptide reads, in one-letter code: Putative 2-aminoethylphosphonate import ATP-binding protein PhnT (369 aa).

The region spanning 19–250 is the ABC transporter domain; that stretch reads IVLDSLRVAY…PPNRFAAEFL (232 aa). Residue 51–58 participates in ATP binding; the sequence is GPSGSGKT.

It belongs to the ABC transporter superfamily. 2-aminoethylphosphonate importer (TC 3.A.1.11.5) family.

It is found in the cell inner membrane. Its function is as follows. Probably part of the PhnSTUV complex (TC 3.A.1.11.5) involved in 2-aminoethylphosphonate import. Probably responsible for energy coupling to the transport system. The sequence is that of Putative 2-aminoethylphosphonate import ATP-binding protein PhnT (phnT) from Salmonella typhimurium (strain LT2 / SGSC1412 / ATCC 700720).